The primary structure comprises 62 residues: Photosystem II reaction center protein Z (62 aa).

2 helical membrane-spanning segments follow: residues 8–28 (AVFALIATSSILLISVPVVFA) and 41–61 (FSGTSLWIGLVFLVGILNSLI).

This sequence belongs to the PsbZ family. As to quaternary structure, PSII is composed of 1 copy each of membrane proteins PsbA, PsbB, PsbC, PsbD, PsbE, PsbF, PsbH, PsbI, PsbJ, PsbK, PsbL, PsbM, PsbT, PsbY, PsbZ, Psb30/Ycf12, at least 3 peripheral proteins of the oxygen-evolving complex and a large number of cofactors. It forms dimeric complexes.

It is found in the plastid. The protein resides in the chloroplast thylakoid membrane. In terms of biological role, may control the interaction of photosystem II (PSII) cores with the light-harvesting antenna, regulates electron flow through the 2 photosystem reaction centers. PSII is a light-driven water plastoquinone oxidoreductase, using light energy to abstract electrons from H(2)O, generating a proton gradient subsequently used for ATP formation. The protein is Photosystem II reaction center protein Z of Gossypium barbadense (Sea Island cotton).